The chain runs to 148 residues: uncharacterized protein (148 aa).

This is an uncharacterized protein from Haemophilus influenzae (strain ATCC 51907 / DSM 11121 / KW20 / Rd).